The following is a 100-amino-acid chain: NAD(P)H-quinone oxidoreductase subunit 4L, chloroplastic (100 aa).

Helical transmembrane passes span 2–22, 28–48, and 61–81; these read ILQHILILSSFLFCLGIFGLI, VKILICLELIFNAVNLNLVIF, and LFGLFIIAIAAAEAAIALAIL.

The protein belongs to the complex I subunit 4L family. In terms of assembly, NDH is composed of at least 16 different subunits, 5 of which are encoded in the nucleus.

It localises to the plastid. The protein resides in the chloroplast thylakoid membrane. The enzyme catalyses a plastoquinone + NADH + (n+1) H(+)(in) = a plastoquinol + NAD(+) + n H(+)(out). It carries out the reaction a plastoquinone + NADPH + (n+1) H(+)(in) = a plastoquinol + NADP(+) + n H(+)(out). NDH shuttles electrons from NAD(P)H:plastoquinone, via FMN and iron-sulfur (Fe-S) centers, to quinones in the photosynthetic chain and possibly in a chloroplast respiratory chain. The immediate electron acceptor for the enzyme in this species is believed to be plastoquinone. Couples the redox reaction to proton translocation, and thus conserves the redox energy in a proton gradient. This chain is NAD(P)H-quinone oxidoreductase subunit 4L, chloroplastic, found in Chara vulgaris (Common stonewort).